A 308-amino-acid polypeptide reads, in one-letter code: Probable peptidyl-prolyl cis-trans isomerase B (308 aa).

The tract at residues 74 to 123 is disordered; the sequence is DHQSTTSATPTDSASTSPPQAATAPPLPPFKPSANLGANCQYPPSPDKAV. Low complexity predominate over residues 77 to 97; sequence STTSATPTDSASTSPPQAATA. The PPIase cyclophilin-type domain occupies 139-307; sequence AQVSVSMVTN…TEVTITSVLL (169 aa).

The protein belongs to the cyclophilin-type PPIase family.

It carries out the reaction [protein]-peptidylproline (omega=180) = [protein]-peptidylproline (omega=0). PPIases accelerate the folding of proteins. It catalyzes the cis-trans isomerization of proline imidic peptide bonds in oligopeptides. The protein is Probable peptidyl-prolyl cis-trans isomerase B (ppiB) of Mycobacterium tuberculosis (strain CDC 1551 / Oshkosh).